Consider the following 625-residue polypeptide: Threonine--tRNA ligase (625 aa).

Residues 1–143 are editing domain; the sequence is MRILLIHSDY…ELSRTIIPEG (143 aa). The interval 206–505 is catalytic; that stretch reads PHVKLMLEHE…MQEGKKPMLP (300 aa). Zn(2+) is bound by residues cysteine 298, histidine 350, and histidine 474.

The protein belongs to the class-II aminoacyl-tRNA synthetase family. In terms of assembly, homodimer. It depends on Zn(2+) as a cofactor.

The protein resides in the cytoplasm. It carries out the reaction tRNA(Thr) + L-threonine + ATP = L-threonyl-tRNA(Thr) + AMP + diphosphate + H(+). In terms of biological role, catalyzes the attachment of threonine to tRNA(Thr) in a two-step reaction: L-threonine is first activated by ATP to form Thr-AMP and then transferred to the acceptor end of tRNA(Thr). Also edits incorrectly charged L-seryl-tRNA(Thr). The protein is Threonine--tRNA ligase of Pyrococcus horikoshii (strain ATCC 700860 / DSM 12428 / JCM 9974 / NBRC 100139 / OT-3).